An 838-amino-acid polypeptide reads, in one-letter code: Semaphorin-4G (838 aa).

The N-terminal stretch at 1–17 (MWGRLWPLLLSILTATA) is a signal peptide. Topologically, residues 18 to 675 (VPGPSLRRPS…GAQLAPDVRL (658 aa)) are extracellular. Residues 35 to 505 (RMTIPYEELS…APSGVIQLPL (471 aa)) enclose the Sema domain. Asn-55, Asn-111, and Asn-126 each carry an N-linked (GlcNAc...) asparagine glycan. Cys-104 and Cys-115 are disulfide-bonded. Cystine bridges form between Cys-133–Cys-142, Cys-270–Cys-377, and Cys-294–Cys-337. An N-linked (GlcNAc...) asparagine glycan is attached at Asn-388. In terms of domain architecture, PSI spans 507-558 (SCSRYRSCYDCILARDPYCGWDPGTHACAAATTIANRTALIQDIERGNRGCE). 2 disulfides stabilise this stretch: Cys-508-Cys-525 and Cys-517-Cys-534. Asn-542 and Asn-598 each carry an N-linked (GlcNAc...) asparagine glycan. Residues 567–649 (PPLKTRSVLR…RTLLASYSLT (83 aa)) enclose the Ig-like C2-type domain. Residues Cys-584 and Cys-632 are joined by a disulfide bond. Residues 676-696 (LYVLAIAALGGLCLILASSLL) traverse the membrane as a helical segment. The Cytoplasmic segment spans residues 697 to 838 (YVACLREGRR…LVEQLDESSV (142 aa)). A disordered region spans residues 723 to 777 (SAVQLQTVSGQCPGEEDEGDDEGAGGLEGSCLQIIPGEGAPAPPPPPPPPPPAEL). The span at 736–745 (GEEDEGDDEG) shows a compositional bias: acidic residues. Pro residues predominate over residues 763 to 775 (PAPPPPPPPPPPA). Residues Ser-795 and Ser-837 each carry the phosphoserine modification.

It belongs to the semaphorin family. As to quaternary structure, interacts with PLXNB2.

The protein localises to the cell membrane. Functionally, cell surface receptor for PLXNB2. May play a role in axon guidance. This is Semaphorin-4G (SEMA4G) from Homo sapiens (Human).